Consider the following 439-residue polypeptide: Xaa-Pro dipeptidase (439 aa).

Residues Asp-244, Asp-255, His-335, Glu-380, and Glu-419 each contribute to the Mn(2+) site.

This sequence belongs to the peptidase M24B family. Bacterial-type prolidase subfamily. Mn(2+) is required as a cofactor.

The enzyme catalyses Xaa-L-Pro dipeptide + H2O = an L-alpha-amino acid + L-proline. In terms of biological role, splits dipeptides with a prolyl residue in the C-terminal position. The protein is Xaa-Pro dipeptidase of Shewanella sp. (strain MR-7).